Here is a 460-residue protein sequence, read N- to C-terminus: tRNA modification GTPase MnmE (460 aa).

Positions 29, 89, and 128 each coordinate (6S)-5-formyl-5,6,7,8-tetrahydrofolate. Residues 224–382 (GVPTVIIGKP…LKQNLLEIIQ (159 aa)) form the TrmE-type G domain. K(+) is bound at residue Asn-234. GTP is bound by residues 234–239 (NAGKST), 253–259 (SEIAGTT), and 278–281 (DTAG). Position 238 (Ser-238) interacts with Mg(2+). K(+) is bound by residues Ser-253, Ile-255, and Thr-258. Thr-259 lines the Mg(2+) pocket. Lys-460 serves as a coordination point for (6S)-5-formyl-5,6,7,8-tetrahydrofolate.

This sequence belongs to the TRAFAC class TrmE-Era-EngA-EngB-Septin-like GTPase superfamily. TrmE GTPase family. In terms of assembly, homodimer. Heterotetramer of two MnmE and two MnmG subunits. K(+) serves as cofactor.

It is found in the cytoplasm. Exhibits a very high intrinsic GTPase hydrolysis rate. Involved in the addition of a carboxymethylaminomethyl (cmnm) group at the wobble position (U34) of certain tRNAs, forming tRNA-cmnm(5)s(2)U34. In Cytophaga hutchinsonii (strain ATCC 33406 / DSM 1761 / CIP 103989 / NBRC 15051 / NCIMB 9469 / D465), this protein is tRNA modification GTPase MnmE.